Here is a 1082-residue protein sequence, read N- to C-terminus: Probable arabinosyltransferase B (1082 aa).

13 helical membrane passes run 28 to 50, 223 to 241, 262 to 281, 333 to 352, 359 to 381, 420 to 442, 462 to 481, 522 to 544, 557 to 574, 578 to 600, 613 to 635, 650 to 672, and 689 to 711; these read WVAT…LPVT, LAAM…LALW, VTAV…VIGA, SIWI…LLLS, LGPA…LGAW, AITT…AALL, WPLI…VVFA, AISR…FMML, AWRL…LMFT, WTHH…TVLV, AFLS…WWYV, GGVQ…AFWL, and APIP…IGVV.

This sequence belongs to the emb family.

It is found in the cell membrane. Its function is as follows. Arabinosyl transferase responsible for the polymerization of arabinose into the arabinan of arabinogalactan. The chain is Probable arabinosyltransferase B (embB) from Mycolicibacterium smegmatis (Mycobacterium smegmatis).